The following is an 81-amino-acid chain: Photosystem I iron-sulfur center (81 aa).

4Fe-4S ferredoxin-type domains lie at 2–31 and 37–68; these read SHAVKIYDTCIGCTQCVRACPLDVLEMVPW and GQIASSPRTEDCVGCKRCETACPTDFLSIRVY. Residues cysteine 11, cysteine 14, cysteine 17, cysteine 21, cysteine 48, cysteine 51, cysteine 54, and cysteine 58 each contribute to the [4Fe-4S] cluster site.

The cyanobacterial PSI reaction center is composed of one copy each of PsaA,B,C,D,E,F,I,J,K,L,M and X, and forms trimeric complexes. Requires [4Fe-4S] cluster as cofactor.

Its subcellular location is the cellular thylakoid membrane. The catalysed reaction is reduced [plastocyanin] + hnu + oxidized [2Fe-2S]-[ferredoxin] = oxidized [plastocyanin] + reduced [2Fe-2S]-[ferredoxin]. Its function is as follows. Apoprotein for the two 4Fe-4S centers FA and FB of photosystem I (PSI); essential for photochemical activity. FB is the terminal electron acceptor of PSI, donating electrons to ferredoxin. The C-terminus interacts with PsaA/B/D and helps assemble the protein into the PSI complex. Required for binding of PsaD and PsaE to PSI. PSI is a plastocyanin/cytochrome c6-ferredoxin oxidoreductase, converting photonic excitation into a charge separation, which transfers an electron from the donor P700 chlorophyll pair to the spectroscopically characterized acceptors A0, A1, FX, FA and FB in turn. This Synechococcus sp. (strain WH8103) protein is Photosystem I iron-sulfur center.